Here is a 213-residue protein sequence, read N- to C-terminus: Charged multivesicular body protein 2b (213 aa).

N-acetylalanine is present on Ala-2. Residues 25–55 are a coiled coil; that stretch reads QRAIIRDRAALEKQEKQLELEIKKMAKIGNK. The segment at 178–202 is disordered; that stretch reads MAKAPSAARSLPSASTSKSTISDEE. Low complexity predominate over residues 179 to 194; it reads AKAPSAARSLPSASTS. Ser-199 carries the post-translational modification Phosphoserine. The MIT-interacting motif motif lies at 201-211; that stretch reads EEIERQLKALG.

This sequence belongs to the SNF7 family. Probable core component of the endosomal sorting required for transport complex III (ESCRT-III). ESCRT-III components are thought to multimerize to form a flat lattice on the perimeter membrane of the endosome. Several assembly forms of ESCRT-III may exist that interact and act sequentially. Interacts with CHMP2A. Interacts with VPS4A. Interacts with VPS4B; the interaction is direct.

It localises to the cytoplasm. The protein localises to the cytosol. The protein resides in the late endosome membrane. Probable core component of the endosomal sorting required for transport complex III (ESCRT-III) which is involved in multivesicular bodies (MVBs) formation and sorting of endosomal cargo proteins into MVBs. MVBs contain intraluminal vesicles (ILVs) that are generated by invagination and scission from the limiting membrane of the endosome and mostly are delivered to lysosomes enabling degradation of membrane proteins, such as stimulated growth factor receptors, lysosomal enzymes and lipids. The MVB pathway appears to require the sequential function of ESCRT-O, -I,-II and -III complexes. ESCRT-III proteins mostly dissociate from the invaginating membrane before the ILV is released. The ESCRT machinery also functions in topologically equivalent membrane fission events, such as the terminal stages of cytokinesis and the budding of enveloped viruses (lentiviruses). ESCRT-III proteins are believed to mediate the necessary vesicle extrusion and/or membrane fission activities, possibly in conjunction with the AAA ATPase VPS4. The polypeptide is Charged multivesicular body protein 2b (CHMP2B) (Bos taurus (Bovine)).